Reading from the N-terminus, the 232-residue chain is Large ribosomal subunit protein uL1 (232 aa).

Belongs to the universal ribosomal protein uL1 family. In terms of assembly, part of the 50S ribosomal subunit.

Binds directly to 23S rRNA. The L1 stalk is quite mobile in the ribosome, and is involved in E site tRNA release. Its function is as follows. Protein L1 is also a translational repressor protein, it controls the translation of the L11 operon by binding to its mRNA. The sequence is that of Large ribosomal subunit protein uL1 from Xanthobacter autotrophicus (strain ATCC BAA-1158 / Py2).